The primary structure comprises 83 residues: SPbeta prophage-derived uncharacterized protein YopE (83 aa).

A run of 2 helical transmembrane segments spans residues 5–25 (AYFL…FIFV) and 60–80 (VIAF…TKLF).

It is found in the cell membrane. This chain is SPbeta prophage-derived uncharacterized protein YopE (yopE), found in Bacillus subtilis (strain 168).